A 528-amino-acid polypeptide reads, in one-letter code: ATP synthase subunit alpha 1 (528 aa).

Residue 177 to 184 coordinates ATP; sequence GDRQTGKT.

The protein belongs to the ATPase alpha/beta chains family. F-type ATPases have 2 components, CF(1) - the catalytic core - and CF(0) - the membrane proton channel. CF(1) has five subunits: alpha(3), beta(3), gamma(1), delta(1), epsilon(1). CF(0) has three main subunits: a(1), b(2) and c(9-12). The alpha and beta chains form an alternating ring which encloses part of the gamma chain. CF(1) is attached to CF(0) by a central stalk formed by the gamma and epsilon chains, while a peripheral stalk is formed by the delta and b chains.

The protein localises to the cell inner membrane. The enzyme catalyses ATP + H2O + 4 H(+)(in) = ADP + phosphate + 5 H(+)(out). Its function is as follows. Produces ATP from ADP in the presence of a proton gradient across the membrane. The alpha chain is a regulatory subunit. The sequence is that of ATP synthase subunit alpha 1 from Pseudoalteromonas atlantica (strain T6c / ATCC BAA-1087).